The following is a 255-amino-acid chain: Type III pantothenate kinase (255 aa).

Residue 6-13 (DVGNTNTV) coordinates ATP. 108 to 111 (GADR) provides a ligand contact to substrate. Catalysis depends on aspartate 110, which acts as the Proton acceptor. Aspartate 130 provides a ligand contact to K(+). Threonine 133 contacts ATP. Threonine 185 contacts substrate.

The protein belongs to the type III pantothenate kinase family. Homodimer. It depends on NH4(+) as a cofactor. Requires K(+) as cofactor.

It is found in the cytoplasm. It catalyses the reaction (R)-pantothenate + ATP = (R)-4'-phosphopantothenate + ADP + H(+). It participates in cofactor biosynthesis; coenzyme A biosynthesis; CoA from (R)-pantothenate: step 1/5. Functionally, catalyzes the phosphorylation of pantothenate (Pan), the first step in CoA biosynthesis. This chain is Type III pantothenate kinase, found in Hyphomonas neptunium (strain ATCC 15444).